The primary structure comprises 629 residues: MAEFETTFADLGLKAPILEALNDLGYEKPSPIQAECIPHLLNGRDVLGMAQTGSGKTAAFSLPLLQNLDPELKAPQILVLAPTRELAVQVAEAMTDFSKHMRGVNVVALYGGQRYDVQLRALRQGPQIVVGTPGRLLDHLKRGTLDLSKLSGLVLDEADEMLRMGFIEDVETIMAQIPEGHQTALFSATMPEAIRRITRRFMKEPQEVRIQSSVTTRPDISQSYWTVWGMRKNEALVRFLEAEDFDAAIIFVRTKNATLEVAEALERNGYNSAALNGDMNQALREQTLERLKDGRLDILIATDVAARGLDVERISLVVNYDIPMDSESYVHRIGRTGRAGRAGRALLFVENRERRLLRNIERTMKLTIPEVELPNAELLGKRRLEKFAAKVQQQLESSDLDQYRALLSKIQPTAEGEELDLETLAAALLKMAQGERTLIVPPDAPMRPKREFRDRDDRGPRDRNDRGPRGDREDRPRRERRDVGDMQLYRIEVGRDDGVEVRHIVGAIANEGDISSRYIGNIKLFASHSTIELPKGMPGEVLQHFTRTRILNKPMNMQLLGDAQPHTGGERRGGGRGFGGERREGGRNFSGERREGGRGDGRRFSGERREGRAPRRDDSTGRRRFGGDA.

A Q motif motif is present at residues 6-34 (TTFADLGLKAPILEALNDLGYEKPSPIQA). Residues 37–208 (IPHLLNGRDV…RRFMKEPQEV (172 aa)) enclose the Helicase ATP-binding domain. An ATP-binding site is contributed by 50 to 57 (AQTGSGKT). The short motif at 156–159 (DEAD) is the DEAD box element. A Helicase C-terminal domain is found at 232-379 (KNEALVRFLE…EVELPNAELL (148 aa)). 2 disordered regions span residues 438–481 (LIVP…RERR) and 560–629 (LGDA…GGDA). 2 stretches are compositionally biased toward basic and acidic residues: residues 446 to 481 (MRPKREFRDRDDRGPRDRNDRGPRGDREDRPRRERR) and 568 to 629 (GGER…GGDA).

The protein belongs to the DEAD box helicase family. DeaD/CsdA subfamily. Interacts with the 50S ribosomal subunit upon shifting to 15 degrees Celsius. Also found associated with the RNA degradosome at 15 degrees Celsius; binds RNase E (rne).

The protein localises to the cytoplasm. It carries out the reaction ATP + H2O = ADP + phosphate + H(+). In terms of biological role, DEAD-box RNA helicase involved in various cellular processes at low temperature, including ribosome biogenesis, mRNA degradation and translation initiation. Exhibits RNA-stimulated ATP hydrolysis and RNA unwinding activity at low temperature. Involved in 50S ribosomal subunit assembly, acting after SrmB, and could also play a role in the biogenesis of the 30S ribosomal subunit. In addition, is involved in mRNA decay, via formation of a cold-shock degradosome with RNase E. Also stimulates translation of some mRNAs, probably at the level of initiation. The sequence is that of ATP-dependent RNA helicase DeaD from Escherichia coli (strain K12).